Here is a 76-residue protein sequence, read N- to C-terminus: Large ribosomal subunit protein bL31 (76 aa).

Zn(2+) is bound by residues Cys16, Cys18, Cys38, and Cys41.

This sequence belongs to the bacterial ribosomal protein bL31 family. Type A subfamily. Part of the 50S ribosomal subunit. Zn(2+) is required as a cofactor.

Functionally, binds the 23S rRNA. This chain is Large ribosomal subunit protein bL31, found in Nocardia farcinica (strain IFM 10152).